A 429-amino-acid polypeptide reads, in one-letter code: Tyrosine--tRNA ligase (429 aa).

Residue Tyr36 coordinates L-tyrosine. Residues 41–50 (PTAASLHAGH) carry the 'HIGH' region motif. L-tyrosine is bound by residues Tyr171 and Gln175. The short motif at 231–235 (KFGKS) is the 'KMSKS' region element. Lys234 is an ATP binding site. Residues 360–417 (ATIVDLLVATGLAESRGAARRTVNEGGAAVNNQKIADPDWTPADGDYLHGRWLVVRRG) enclose the S4 RNA-binding domain.

The protein belongs to the class-I aminoacyl-tRNA synthetase family. TyrS type 1 subfamily. As to quaternary structure, homodimer.

The protein localises to the cytoplasm. The enzyme catalyses tRNA(Tyr) + L-tyrosine + ATP = L-tyrosyl-tRNA(Tyr) + AMP + diphosphate + H(+). Functionally, catalyzes the attachment of tyrosine to tRNA(Tyr) in a two-step reaction: tyrosine is first activated by ATP to form Tyr-AMP and then transferred to the acceptor end of tRNA(Tyr). In Nocardia farcinica (strain IFM 10152), this protein is Tyrosine--tRNA ligase.